A 414-amino-acid polypeptide reads, in one-letter code: Tyrosine--tRNA ligase (414 aa).

Tyr-35 lines the L-tyrosine pocket. Residues 40 to 49 (PTADSLHVGH) carry the 'HIGH' region motif. Positions 164 and 168 each coordinate L-tyrosine. Positions 226 to 230 (KFGKT) match the 'KMSKS' region motif. Lys-229 is an ATP binding site. The S4 RNA-binding domain occupies 347 to 414 (TKVIDALVEL…KKKYFVILVK (68 aa)).

The protein belongs to the class-I aminoacyl-tRNA synthetase family. TyrS type 1 subfamily. As to quaternary structure, homodimer.

Its subcellular location is the cytoplasm. The enzyme catalyses tRNA(Tyr) + L-tyrosine + ATP = L-tyrosyl-tRNA(Tyr) + AMP + diphosphate + H(+). Functionally, catalyzes the attachment of tyrosine to tRNA(Tyr) in a two-step reaction: tyrosine is first activated by ATP to form Tyr-AMP and then transferred to the acceptor end of tRNA(Tyr). In Mycoplasma capricolum subsp. capricolum (strain California kid / ATCC 27343 / NCTC 10154), this protein is Tyrosine--tRNA ligase.